The chain runs to 138 residues: ATP synthase epsilon chain (138 aa).

The segment at 88-119 (DREEARSTLSAAQARLDQSEQSEDKQERYEAQ) is disordered. Positions 109-119 (SEDKQERYEAQ) are enriched in basic and acidic residues.

It belongs to the ATPase epsilon chain family. F-type ATPases have 2 components, CF(1) - the catalytic core - and CF(0) - the membrane proton channel. CF(1) has five subunits: alpha(3), beta(3), gamma(1), delta(1), epsilon(1). CF(0) has three main subunits: a, b and c.

It localises to the cellular thylakoid membrane. Produces ATP from ADP in the presence of a proton gradient across the membrane. The sequence is that of ATP synthase epsilon chain from Acaryochloris marina (strain MBIC 11017).